A 486-amino-acid chain; its full sequence is Glutamate--tRNA ligase 1 (486 aa).

Residues 9 to 19 (PSPTGMLHIGG) carry the 'HIGH' region motif. Positions 259 to 263 (KLSKR) match the 'KMSKS' region motif. An ATP-binding site is contributed by Lys-262.

This sequence belongs to the class-I aminoacyl-tRNA synthetase family. Glutamate--tRNA ligase type 1 subfamily. As to quaternary structure, monomer.

Its subcellular location is the cytoplasm. The enzyme catalyses tRNA(Glu) + L-glutamate + ATP = L-glutamyl-tRNA(Glu) + AMP + diphosphate. Catalyzes the attachment of glutamate to tRNA(Glu) in a two-step reaction: glutamate is first activated by ATP to form Glu-AMP and then transferred to the acceptor end of tRNA(Glu). The protein is Glutamate--tRNA ligase 1 of Hyphomonas neptunium (strain ATCC 15444).